We begin with the raw amino-acid sequence, 813 residues long: Probable E3 ubiquitin-protein ligase hulA (813 aa).

Residues 1-109 (MGSNLPAQPN…QMGGDEMLTR (109 aa)) enclose the C2 domain. Disordered stretches follow at residues 131–235 (NLST…GWER) and 251–351 (RTTT…YFVD). Residues 148–167 (VQSSTSSGLVPQVAPSSSHP) are compositionally biased toward polar residues. Positions 188–215 (RVPSTTRPSSTAAPASAAGAAVSNSHGS) are enriched in low complexity. Residues 227–260 (GRLPAGWERREDNLGRTYYVDHNTRTTTWTRPSS) form the WW 1 domain. Residues 251 to 264 (RTTTWTRPSSNYNE) are compositionally biased toward polar residues. The segment covering 265–292 (HAQRSQREANMQLERRAHQSRMLPEDRT) has biased composition (basic and acidic residues). Positions 293 to 307 (GANSPNLPESSQQAH) are enriched in polar residues. A compositionally biased stretch (low complexity) spans 322 to 331 (ATGATTAGTG). 2 consecutive WW domains span residues 331–364 (GELP…DPRR) and 391–424 (GPLP…DPRL). The region spanning 480–813 (SASDLKKRLM…VEETLGFGQE (334 aa)) is the HECT domain. Cysteine 781 acts as the Glycyl thioester intermediate in catalysis.

Belongs to the RSP5/NEDD4 family. Interacts with creD.

The protein localises to the cytoplasm. It carries out the reaction S-ubiquitinyl-[E2 ubiquitin-conjugating enzyme]-L-cysteine + [acceptor protein]-L-lysine = [E2 ubiquitin-conjugating enzyme]-L-cysteine + N(6)-ubiquitinyl-[acceptor protein]-L-lysine.. It functions in the pathway protein modification; protein ubiquitination. Functionally, E3 ubiquitin-protein ligase which accepts ubiquitin from an E2 ubiquitin-conjugating enzyme in the form of a thioester and then directly transfers the ubiquitin to targeted substrates. Probably involved in the regulatory network controlling carbon source utilization. The polypeptide is Probable E3 ubiquitin-protein ligase hulA (hulA) (Aspergillus fumigatus (strain CBS 144.89 / FGSC A1163 / CEA10) (Neosartorya fumigata)).